We begin with the raw amino-acid sequence, 129 residues long: Small ribosomal subunit protein uS11 (129 aa).

This sequence belongs to the universal ribosomal protein uS11 family. As to quaternary structure, part of the 30S ribosomal subunit. Interacts with proteins S7 and S18. Binds to IF-3.

In terms of biological role, located on the platform of the 30S subunit, it bridges several disparate RNA helices of the 16S rRNA. Forms part of the Shine-Dalgarno cleft in the 70S ribosome. The protein is Small ribosomal subunit protein uS11 of Parvibaculum lavamentivorans (strain DS-1 / DSM 13023 / NCIMB 13966).